We begin with the raw amino-acid sequence, 261 residues long: Thiazole synthase (261 aa).

Catalysis depends on lysine 102, which acts as the Schiff-base intermediate with DXP. Residues glycine 163, 189 to 190, and 211 to 212 each bind 1-deoxy-D-xylulose 5-phosphate; these read AG and NT.

The protein belongs to the ThiG family. As to quaternary structure, homotetramer. Forms heterodimers with either ThiH or ThiS.

It is found in the cytoplasm. The catalysed reaction is [ThiS sulfur-carrier protein]-C-terminal-Gly-aminoethanethioate + 2-iminoacetate + 1-deoxy-D-xylulose 5-phosphate = [ThiS sulfur-carrier protein]-C-terminal Gly-Gly + 2-[(2R,5Z)-2-carboxy-4-methylthiazol-5(2H)-ylidene]ethyl phosphate + 2 H2O + H(+). The protein operates within cofactor biosynthesis; thiamine diphosphate biosynthesis. In terms of biological role, catalyzes the rearrangement of 1-deoxy-D-xylulose 5-phosphate (DXP) to produce the thiazole phosphate moiety of thiamine. Sulfur is provided by the thiocarboxylate moiety of the carrier protein ThiS. In vitro, sulfur can be provided by H(2)S. This chain is Thiazole synthase, found in Acinetobacter baylyi (strain ATCC 33305 / BD413 / ADP1).